The chain runs to 142 residues: RNA-directed DNA polymerase homolog (142 aa).

It localises to the mitochondrion. It catalyses the reaction RNA(n) + a ribonucleoside 5'-triphosphate = RNA(n+1) + diphosphate. This Oenothera berteroana (Bertero's evening primrose) protein is RNA-directed DNA polymerase homolog.